A 473-amino-acid chain; its full sequence is Photosystem II CP43 reaction center protein (473 aa).

Residues 1–14 (MKTLYSLRRFYPVE) constitute a propeptide that is removed on maturation. Position 15 is an N-acetylthreonine (Thr-15). The residue at position 15 (Thr-15) is a Phosphothreonine. The next 5 helical transmembrane spans lie at 69–93 (LFEVAHFVPEKPMYEQGFILLPHLA), 134–155 (LLGPETLEESFPFFGYVWKDRN), 178–200 (KALSFGGVYDTWAPGGGDVRKIT), 255–275 (KPFAWARRALVWSGEAYLSYS), and 291–312 (WFNNTAYPSEFYGPTGPEASQA). A [CaMn4O5] cluster-binding site is contributed by Glu-367. The helical transmembrane segment at 447–471 (RARAAAAGFEKGIDRDFEPVLSMTP) threads the bilayer.

Belongs to the PsbB/PsbC family. PsbC subfamily. As to quaternary structure, PSII is composed of 1 copy each of membrane proteins PsbA, PsbB, PsbC, PsbD, PsbE, PsbF, PsbH, PsbI, PsbJ, PsbK, PsbL, PsbM, PsbT, PsbX, PsbY, PsbZ, Psb30/Ycf12, at least 3 peripheral proteins of the oxygen-evolving complex and a large number of cofactors. It forms dimeric complexes. Binds multiple chlorophylls and provides some of the ligands for the Ca-4Mn-5O cluster of the oxygen-evolving complex. It may also provide a ligand for a Cl- that is required for oxygen evolution. PSII binds additional chlorophylls, carotenoids and specific lipids. serves as cofactor.

It localises to the plastid. The protein resides in the chloroplast thylakoid membrane. Its function is as follows. One of the components of the core complex of photosystem II (PSII). It binds chlorophyll and helps catalyze the primary light-induced photochemical processes of PSII. PSII is a light-driven water:plastoquinone oxidoreductase, using light energy to abstract electrons from H(2)O, generating O(2) and a proton gradient subsequently used for ATP formation. This chain is Photosystem II CP43 reaction center protein, found in Pelargonium hortorum (Common geranium).